We begin with the raw amino-acid sequence, 252 residues long: Ubiquinone biosynthesis O-methyltransferase (252 aa).

Positions 45, 76, 97, and 141 each coordinate S-adenosyl-L-methionine.

The protein belongs to the methyltransferase superfamily. UbiG/COQ3 family.

It catalyses the reaction a 3-demethylubiquinol + S-adenosyl-L-methionine = a ubiquinol + S-adenosyl-L-homocysteine + H(+). It carries out the reaction a 3-(all-trans-polyprenyl)benzene-1,2-diol + S-adenosyl-L-methionine = a 2-methoxy-6-(all-trans-polyprenyl)phenol + S-adenosyl-L-homocysteine + H(+). It participates in cofactor biosynthesis; ubiquinone biosynthesis. O-methyltransferase that catalyzes the 2 O-methylation steps in the ubiquinone biosynthetic pathway. In Caulobacter sp. (strain K31), this protein is Ubiquinone biosynthesis O-methyltransferase.